The chain runs to 670 residues: Cyclic di-GMP phosphodiesterase PdeA (670 aa).

Residues 428–670 (QNKIFQYILK…GFLWHKPEPI (243 aa)) form the EAL domain.

The catalysed reaction is 3',3'-c-di-GMP + H2O = 5'-phosphoguanylyl(3'-&gt;5')guanosine + H(+). Phosphodiesterase (PDE) that catalyzes the hydrolysis of cyclic diguanylate (c-di-GMP) to pGpG. This Borreliella burgdorferi (strain ATCC 35210 / DSM 4680 / CIP 102532 / B31) (Borrelia burgdorferi) protein is Cyclic di-GMP phosphodiesterase PdeA.